We begin with the raw amino-acid sequence, 232 residues long: Pseudaminic acid cytidylyltransferase (232 aa).

It belongs to the CMP-NeuNAc synthase family. Requires Mg(2+) as cofactor.

It catalyses the reaction pseudaminate + CTP = CMP-pseudaminate + diphosphate. In terms of biological role, catalyzes the final step in the biosynthesis of pseudaminic acid, a sialic-acid-like sugar that is used to modify flagellin. Mediates the activation of pseudaminic acid with CMP by forming CMP-pseudaminic acid. The sequence is that of Pseudaminic acid cytidylyltransferase (pseF) from Campylobacter jejuni subsp. jejuni serotype O:23/36 (strain 81-176).